We begin with the raw amino-acid sequence, 303 residues long: GTPase Era (303 aa).

The 169-residue stretch at 8-176 (YCGFIAIVGR…ASIVRKHMPE (169 aa)) folds into the Era-type G domain. Residues 16–23 (GRPNVGKS) form a G1 region. 16–23 (GRPNVGKS) contacts GTP. The interval 42–46 (QTTRH) is G2. The interval 63–66 (DTPG) is G3. GTP-binding positions include 63–67 (DTPGL) and 125–128 (NKVD). Positions 125–128 (NKVD) are G4. A G5 region spans residues 155 to 157 (ISA). The 78-residue stretch at 207 to 284 (LGEELPYSVT…HLELWVKVKS (78 aa)) folds into the KH type-2 domain.

This sequence belongs to the TRAFAC class TrmE-Era-EngA-EngB-Septin-like GTPase superfamily. Era GTPase family. As to quaternary structure, monomer.

It is found in the cytoplasm. The protein resides in the cell inner membrane. Its function is as follows. An essential GTPase that binds both GDP and GTP, with rapid nucleotide exchange. Plays a role in 16S rRNA processing and 30S ribosomal subunit biogenesis and possibly also in cell cycle regulation and energy metabolism. The sequence is that of GTPase Era from Yersinia pseudotuberculosis serotype O:1b (strain IP 31758).